The primary structure comprises 185 residues: uncharacterized protein (185 aa).

The signal sequence occupies residues 1 to 18 (MLLKLILILCFLVTLSLS). Residues 30–185 (TQGPTIASGG…VQDCGEITGW (156 aa)) are disordered. Residues 86–101 (RAQEGGKKDTTKEQPK) show a composition bias toward basic and acidic residues. Residues 103–116 (NNNNKNLGRHSSSG) show a composition bias toward low complexity. Positions 117–135 (SGSGSGSGCGVTGDTGTGS) are enriched in gly residues.

It localises to the secreted. This is an uncharacterized protein from Dictyostelium discoideum (Social amoeba).